The primary structure comprises 284 residues: Bifunctional protein FolD (284 aa).

NADP(+)-binding positions include 166–168 (GRS) and Ser-191.

It belongs to the tetrahydrofolate dehydrogenase/cyclohydrolase family. As to quaternary structure, homodimer.

It carries out the reaction (6R)-5,10-methylene-5,6,7,8-tetrahydrofolate + NADP(+) = (6R)-5,10-methenyltetrahydrofolate + NADPH. The catalysed reaction is (6R)-5,10-methenyltetrahydrofolate + H2O = (6R)-10-formyltetrahydrofolate + H(+). The protein operates within one-carbon metabolism; tetrahydrofolate interconversion. In terms of biological role, catalyzes the oxidation of 5,10-methylenetetrahydrofolate to 5,10-methenyltetrahydrofolate and then the hydrolysis of 5,10-methenyltetrahydrofolate to 10-formyltetrahydrofolate. This chain is Bifunctional protein FolD, found in Leptospira borgpetersenii serovar Hardjo-bovis (strain JB197).